A 444-amino-acid chain; its full sequence is E1B 55 kDa protein (444 aa).

Residues 1-35 (MEQNADMEPDRQVNQRPPRFRARGAGVRGRGRVRR) form a disordered region. Phosphoserine occurs at positions 438 and 439.

Belongs to the adenoviridae E1B 55 kDa protein family. As to quaternary structure, interacts with host PML-4 and PML-5; this interaction promotes efficient subnuclear targeting of E1B-55K to PML nuclear bodies. Interacts with E4-ORF3 protein. Interacts with E4-ORF6 protein.

The protein localises to the host nucleus. The protein resides in the host cytoplasm. Plays a major role to prevent cellular inhibition of viral genome replication. Assembles an SCF-like E3 ubiquitin ligase complex based on the cellular proteins ELOB, ELOC, CUL5 and RBX1, in cooperation with viral E4orf6. This viral RING-type ligase ubiquitinates cellular substrates and targets them to proteasomal degradation: TP53/p53, LIG4, MRE11-RAD50-NBS1 (MRN) complex, ITGA3, DAXX and BLM. E1B-55K probably acts as the substrate-specific adapter of the SCF-like E3 ubiquitin ligase complex. Degradation of host TP53/p53 activity is essential for preventing E1A-induced TP53 accumulation that would otherwise lead to cell apoptosis and growth arrest. E1B-55K also inactivates TP53 transcription-factor activity by binding its transactivation domain. E1B-55K also functions as a SUMO1 E3 ligase for TP53 which causes the latter to be sequestered in promyelocytic leukemia (PML) nuclear bodies thereby contributing to maximal inhibition of TP53 function. The polypeptide is E1B 55 kDa protein (Canis lupus familiaris (Dog)).